The primary structure comprises 545 residues: Probable acyl-activating enzyme 4 (545 aa).

This sequence belongs to the ATP-dependent AMP-binding enzyme family. As to expression, expressed in roots, leaves, stems, flowers and developing seeds.

In terms of biological role, may act as an acid--thiol ligase that activates carboxylic acids by forming acyl-CoAs. In Arabidopsis thaliana (Mouse-ear cress), this protein is Probable acyl-activating enzyme 4 (AEE4).